The primary structure comprises 1010 residues: Ubiquitin conjugation factor E4 (1010 aa).

A disordered region spans residues alanine 13–proline 70. Over residues serine 24–lysine 44 the composition is skewed to basic and acidic residues. The region spanning aspartate 930 to lysine 1004 is the U-box domain.

Belongs to the ubiquitin conjugation factor E4 family.

The protein localises to the cytoplasm. The protein resides in the nucleus. It functions in the pathway protein modification; protein ubiquitination. E4 ubiquitin chain-elongation enzyme specifically involved in polyubiquitin chain assembly. Binds to cdc48 and elongates mono- and diubiquitinated ERAD substrates presented by the ufd1-npl4-cdc48 (UNC) AAA ATPase complex to a chain length of 4 to 6 ubiquitin moieties. Delivers these polyubiquitinated substrates to downstream ERAD components, which target them to the proteasome. Enhances ubiquitination at 'Lys-48', but not at 'Lys-29' of the Ub moiety. This Schizosaccharomyces pombe (strain 972 / ATCC 24843) (Fission yeast) protein is Ubiquitin conjugation factor E4 (ufd2).